The chain runs to 262 residues: Taurine import ATP-binding protein TauB (262 aa).

An ABC transporter domain is found at 4–233 (LELERISAQY…RYAAGESARA (230 aa)). 38–45 (GPSGSGKT) contacts ATP.

The protein belongs to the ABC transporter superfamily. Taurine importer (TC 3.A.1.17.1) family. As to quaternary structure, the complex is composed of two ATP-binding proteins (TauB), two transmembrane proteins (TauC) and a solute-binding protein (TauA).

It localises to the cell inner membrane. The catalysed reaction is taurine(out) + ATP + H2O = taurine(in) + ADP + phosphate + H(+). Its function is as follows. Part of the ABC transporter complex TauABC involved in taurine import. Responsible for energy coupling to the transport system. This chain is Taurine import ATP-binding protein TauB, found in Pseudomonas putida (Arthrobacter siderocapsulatus).